We begin with the raw amino-acid sequence, 35 residues long: GFGSLFKFLAKKVAKTVAKQAAKQGAKYIANKQTE.

Glu-35 is modified (glutamic acid 1-amide).

As to expression, expressed by the venom gland.

It localises to the secreted. Has antimicrobial activity against E.coli, E.faecalis, P.aeruginosa, and S.aureus. The sequence is that of Cupiennin-1c from Cupiennius salei (American wandering spider).